The primary structure comprises 445 residues: Fibrinogen gamma chain (445 aa).

The signal sequence occupies residues 1–25 (MNWSLQLRSFILCWALLLLSPTGLA). Asn78 is a glycosylation site (N-linked (GlcNAc...) asparagine). Residues 170-416 (RIHDTTGKDC…ETTMKIIPFN (247 aa)) enclose the Fibrinogen C-terminal domain. A disulfide bond links Cys179 and Cys208. 3 residues coordinate Ca(2+): Asp344, Asp346, and Gly350. Cys352 and Cys365 are disulfide-bonded. Residues 400 to 422 (TRWYSMKETTMKIIPFNRLSIGD) form a gamma-chain polymerization, binding amino end of another fibrin alpha chain region. Residue Gln424 forms an Isoglutamyl lysine isopeptide (Gln-Lys) (interchain with K-432) linkage. A disordered region spans residues 424–445 (QQHHMGGSKQVSVEHEVDVEYP). The residue at position 431 (Ser431) is a Phosphoserine. Lys432 is covalently cross-linked (Isoglutamyl lysine isopeptide (Lys-Gln) (interchain with Q-424)). Residues 435–445 (SVEHEVDVEYP) show a composition bias toward basic and acidic residues.

As to quaternary structure, heterohexamer; disulfide linked. Contains 2 sets of 3 non-identical chains (alpha, beta and gamma). The 2 heterotrimers are in head to head conformation with the N-termini in a small central domain. Post-translationally, conversion of fibrinogen to fibrin is triggered by thrombin, which cleaves fibrinopeptides A and B from alpha and beta chains, and thus exposes the N-terminal polymerization sites responsible for the formation of the soft clot. The soft clot is converted into the hard clot by factor XIIIA which catalyzes the epsilon-(gamma-glutamyl)lysine cross-linking between gamma chains (stronger) and between alpha chains (weaker) of different monomers.

Its subcellular location is the secreted. In terms of biological role, together with fibrinogen alpha (FGA) and fibrinogen beta (FGB), polymerizes to form an insoluble fibrin matrix. Has a major function in hemostasis as one of the primary components of blood clots. In addition, functions during the early stages of wound repair to stabilize the lesion and guide cell migration during re-epithelialization. Was originally thought to be essential for platelet aggregation, based on in vitro studies using anticoagulated blood. However, subsequent studies have shown that it is not absolutely required for thrombus formation in vivo. Enhances expression of SELP in activated platelets via an ITGB3-dependent pathway. Maternal fibrinogen is essential for successful pregnancy. Fibrin deposition is also associated with infection, where it protects against IFNG-mediated hemorrhage. May also facilitate the antibacterial immune response via both innate and T-cell mediated pathways. This chain is Fibrinogen gamma chain (Fgg), found in Rattus norvegicus (Rat).